Consider the following 183-residue polypeptide: MGADASAFSFRTKTMSHPNLPMTEVLVVADCWQREPDSEAVIQRAVAAAAESVDEDVAEAEVAVMLTDDAGIRTLNSNWRGIDKPTNVLSFPALQPEGEWKEGDAPRMLGDIAIAYETMRREADEEKKPFDHHLSHLAVHGFLHLIGYDHENDDDAEEMEALETQILAHLGIPDPYADRPGTH.

The Zn(2+) site is built by His140, His144, and His150.

This sequence belongs to the endoribonuclease YbeY family. It depends on Zn(2+) as a cofactor.

It localises to the cytoplasm. Functionally, single strand-specific metallo-endoribonuclease involved in late-stage 70S ribosome quality control and in maturation of the 3' terminus of the 16S rRNA. This Bradyrhizobium diazoefficiens (strain JCM 10833 / BCRC 13528 / IAM 13628 / NBRC 14792 / USDA 110) protein is Endoribonuclease YbeY.